Reading from the N-terminus, the 754-residue chain is Endoribonuclease Dicer-like (754 aa).

The PAZ domain maps to 132-251 (QLMCDAKRLS…LPPELCLLLP (120 aa)). 2 RNase III domains span residues 298-418 (FAIT…TGPN) and 613-734 (AQTV…LACG). Mn(2+) contacts are provided by Glu336, Asp404, Glu407, Glu649, Asp720, and Glu723.

As to quaternary structure, homodimer. It depends on Mg(2+) as a cofactor. Requires Mn(2+) as cofactor.

In terms of biological role, involved in cleaving double-stranded RNA in the RNA interference (RNAi) pathway. It produces 21 to 23 bp dsRNAs (siRNAs) which target the selective destruction of homologous RNAs. The chain is Endoribonuclease Dicer-like from Giardia intestinalis (strain ATCC 50803 / WB clone C6) (Giardia lamblia).